A 274-amino-acid chain; its full sequence is Outer surface protein A (274 aa).

Positions 1 to 16 (MKKYLLGIGLILALIA) are cleaved as a signal peptide. Cys17 carries the N-palmitoyl cysteine lipid modification. Cys17 is lipidated: S-diacylglycerol cysteine.

Belongs to the OspA lipoprotein family.

It is found in the cell outer membrane. Its subcellular location is the cell surface. This Borreliella burgdorferi (Lyme disease spirochete) protein is Outer surface protein A.